A 430-amino-acid polypeptide reads, in one-letter code: MQASIESTGNLERRLTFTLPQERLETHVGGRLRELARTTRIKGFRPGKVPTKVIEQRFGQQVRAEAMEGLLRETFDSAVREHSLRLAGNPRIDQGETDFDFVATFEVVPDFGDIDVTTLSVVRATAEVTDADIDQMIENLRLQRRIWNPVERGAQAGDLVALETWSQAGDERLPADGVETGSSVLGSGVMFDQIEKGLEGLTKGEEKTLSVDFPAEWRVPQLAGKTVQVHVKAVEVSEPVLPAVDKEFIKSFGVKSGDAEQFRADIRTNLERELKGALMNRLRREVGEQLIAAYAHVEMPPRLVENEARSMLAQQVEQVRRSGRDPGQVPADAHQGFMDAAAKRVLVGLLVGEVARRNELRLESRRVSDTLRLIASTYEEPEQVIEMYRNDPQLMNGLQSRVMKEQVIDWIAERAQHTEQSLSFQDAIRV.

Positions 157–242 constitute a PPIase FKBP-type domain; sequence GDLVALETWS…AVEVSEPVLP (86 aa).

It belongs to the FKBP-type PPIase family. Tig subfamily.

It is found in the cytoplasm. The enzyme catalyses [protein]-peptidylproline (omega=180) = [protein]-peptidylproline (omega=0). Its function is as follows. Involved in protein export. Acts as a chaperone by maintaining the newly synthesized protein in an open conformation. Functions as a peptidyl-prolyl cis-trans isomerase. The polypeptide is Trigger factor (Xanthomonas oryzae pv. oryzae (strain MAFF 311018)).